We begin with the raw amino-acid sequence, 161 residues long: Ribosome maturation factor RimP (161 aa).

This sequence belongs to the RimP family.

It localises to the cytoplasm. In terms of biological role, required for maturation of 30S ribosomal subunits. The sequence is that of Ribosome maturation factor RimP from Rickettsia conorii (strain ATCC VR-613 / Malish 7).